Reading from the N-terminus, the 342-residue chain is MKVELFDFDLPERLIAQVPLKERDASRLMVLDKKTGEITHSTFKHVIDFLNAGDCIVLNDTRVLPARLYGVKEETGAKVEVLLLKQEEGDVWETLVKPAKRVKRGTVLSFGDGRLTAVCTEELEHGGRKIEFRYEGIFYEVLESLGEMPLPPYIKEQLDDRERYQTVYSKKQGSAAAPTAGLHFTEEILDALREKGVHIAFITLHVGLGTFRPVSAENVEEHDMHAEFYEMSEETAALLNRVRQEGGRIISVGTTSTRTLETIASEHDGRFREASGWTSIFIYPGYTFRAIDGMITNFHLPKSSLIMLVSALAGREHVLSAYRTAVEHEYRFFSFGDAMLIK.

The protein belongs to the QueA family. As to quaternary structure, monomer.

The protein resides in the cytoplasm. It carries out the reaction 7-aminomethyl-7-carbaguanosine(34) in tRNA + S-adenosyl-L-methionine = epoxyqueuosine(34) in tRNA + adenine + L-methionine + 2 H(+). It participates in tRNA modification; tRNA-queuosine biosynthesis. Functionally, transfers and isomerizes the ribose moiety from AdoMet to the 7-aminomethyl group of 7-deazaguanine (preQ1-tRNA) to give epoxyqueuosine (oQ-tRNA). This chain is S-adenosylmethionine:tRNA ribosyltransferase-isomerase, found in Bacillus licheniformis (strain ATCC 14580 / DSM 13 / JCM 2505 / CCUG 7422 / NBRC 12200 / NCIMB 9375 / NCTC 10341 / NRRL NRS-1264 / Gibson 46).